The chain runs to 985 residues: Cation channel sperm-associated auxiliary subunit epsilon (985 aa).

Positions 1–35 (MPSAGQRKPGSLLALQALQKWLLRGGVGAMLARQV) are cleaved as a signal peptide. Over 36–937 (VAALLLWLSC…ESLGMIPRSS (902 aa)) the chain is Extracellular. Intrachain disulfides connect C87–C101, C130–C235, C275–C365, and C439–C442. N-linked (GlcNAc...) asparagine glycans are attached at residues N91, N143, and N292. N502, N517, and N565 each carry an N-linked (GlcNAc...) asparagine glycan. 4 cysteine pairs are disulfide-bonded: C617-C724, C737-C919, C753-C786, and C838-C869. Residue N749 is glycosylated (N-linked (GlcNAc...) asparagine). Residue N830 is glycosylated (N-linked (GlcNAc...) asparagine). N-linked (GlcNAc...) asparagine glycosylation is found at N888, N915, and N920. A helical transmembrane segment spans residues 938 to 958 (VYLVAALIFVLMLTFISILVL). Over 959 to 985 (SYFWYLKIYRQFIIEPLHKRPAKQKKN) the chain is Cytoplasmic.

This sequence belongs to the CATSPERD family. As to quaternary structure, component of the CatSper complex or CatSpermasome composed of the core pore-forming members CATSPER1, CATSPER2, CATSPER3 and CATSPER4 as well as auxiliary members CATSPERB, CATSPERG2, CATSPERD, CATSPERE, CATSPERZ, C2CD6/CATSPERT, SLCO6C1, TMEM249, TMEM262 and EFCAB9. HSPA1 may be an additional auxiliary complex member. The core complex members CATSPER1, CATSPER2, CATSPER3 and CATSPER4 form a heterotetrameric channel. The auxiliary CATSPERB, CATSPERG2, CATSPERD and CATSPERE subunits form a pavilion-like structure over the pore which stabilizes the complex through interactions with CATSPER4, CATSPER3, CATSPER1 and CATSPER2 respectively. SLCO6C1 interacts with CATSPERE and TMEM262/CATSPERH interacts with CATSPERB, further stabilizing the complex. C2CD6/CATSPERT interacts at least with CATSPERD and is required for targeting the CatSper complex in the flagellar membrane. In terms of tissue distribution, testis-specific.

It is found in the cell projection. It localises to the cilium. Its subcellular location is the flagellum membrane. Functionally, auxiliary component of the CatSper complex, a complex involved in sperm cell hyperactivation. Sperm cell hyperactivation is needed for sperm motility which is essential late in the preparation of sperm for fertilization. The chain is Cation channel sperm-associated auxiliary subunit epsilon from Mus musculus (Mouse).